We begin with the raw amino-acid sequence, 169 residues long: Endoribonuclease YbeY (169 aa).

The disordered stretch occupies residues 72 to 95 (GPVAAPRQEPDSPPACRKDSSHAE). 3 residues coordinate Zn(2+): H131, H135, and H141.

This sequence belongs to the endoribonuclease YbeY family. Zn(2+) is required as a cofactor.

It is found in the cytoplasm. In terms of biological role, single strand-specific metallo-endoribonuclease involved in late-stage 70S ribosome quality control and in maturation of the 3' terminus of the 16S rRNA. The sequence is that of Endoribonuclease YbeY from Oleidesulfovibrio alaskensis (strain ATCC BAA-1058 / DSM 17464 / G20) (Desulfovibrio alaskensis).